The chain runs to 215 residues: LysM and putative peptidoglycan-binding domain-containing protein 2 (215 aa).

Residues 1-40 are disordered; that stretch reads MADSSPALSLREGGPRAPRPSAPSPPPRSRSGSESEEAEL. The residue at position 2 (A2) is an N-acetylalanine. Residues S5, S24, S33, and S57 each carry the phosphoserine modification. Residues 17–28 show a composition bias toward pro residues; the sequence is APRPSAPSPPPR. The 45-residue stretch at 71–115 folds into the LysM domain; it reads VEHRVRAGDTLQGIALKYGVTMEQIKRANKLFTNDCIFLKKTLNI. Disordered stretches follow at residues 132 to 175 and 193 to 215; these read DSPE…EEVS and AAKK…LYHS. Basic and acidic residues predominate over residues 196–205; it reads KLKEESRDEE.

In Homo sapiens (Human), this protein is LysM and putative peptidoglycan-binding domain-containing protein 2 (LYSMD2).